We begin with the raw amino-acid sequence, 316 residues long: Glutamyl-Q tRNA(Asp) synthetase (316 aa).

L-glutamate-binding positions include 13-17 (RFAPS) and D49. The 'HIGH' region motif lies at 16–26 (PSPSGDLHFGS). Zn(2+) is bound by residues C105, C107, Y119, and C123. Residues Y176 and R194 each contribute to the L-glutamate site. Positions 232–236 (KLSKQ) match the 'KMSKS' region motif. ATP is bound at residue K235.

Belongs to the class-I aminoacyl-tRNA synthetase family. GluQ subfamily. The cofactor is Zn(2+).

In terms of biological role, catalyzes the tRNA-independent activation of glutamate in presence of ATP and the subsequent transfer of glutamate onto a tRNA(Asp). Glutamate is transferred on the 2-amino-5-(4,5-dihydroxy-2-cyclopenten-1-yl) moiety of the queuosine in the wobble position of the QUC anticodon. This Photorhabdus laumondii subsp. laumondii (strain DSM 15139 / CIP 105565 / TT01) (Photorhabdus luminescens subsp. laumondii) protein is Glutamyl-Q tRNA(Asp) synthetase.